Reading from the N-terminus, the 2251-residue chain is U3 small nucleolar RNA-associated protein 10 (2251 aa).

An HEAT repeat occupies 945–983 (VVPLLLTALADAEAAIRLAAIACLAHILAICKYAGDLAK). 2 consecutive transmembrane segments (helical) span residues 962 to 982 (LAAI…GDLA) and 1460 to 1480 (LLVD…LLVD).

The protein belongs to the HEATR1/UTP10 family. Component of the ribosomal small subunit (SSU) processome.

The protein localises to the nucleus. Its subcellular location is the nucleolus. The protein resides in the membrane. Functionally, involved in nucleolar processing of pre-18S ribosomal RNA. Involved in ribosome biosynthesis. In Mycosarcoma maydis (Corn smut fungus), this protein is U3 small nucleolar RNA-associated protein 10.